Consider the following 159-residue polypeptide: MTDTFWAFIGLILFLALLFYFKVPAMALRSLDERAKRIAGELDEALRLREEAQGILAEYQQKCAGIEQDVQEIITAAKHEAEIIVAEARVKTEEYVKNRNKLVEQKIAQAESDAIQEISSSAVNLAISSASKIINNELGAKKANDLIKESIIKVKTNLH.

A helical transmembrane segment spans residues 5 to 25 (FWAFIGLILFLALLFYFKVPA).

Belongs to the ATPase B chain family. As to quaternary structure, F-type ATPases have 2 components, F(1) - the catalytic core - and F(0) - the membrane proton channel. F(1) has five subunits: alpha(3), beta(3), gamma(1), delta(1), epsilon(1). F(0) has three main subunits: a(1), b(2) and c(10-14). The alpha and beta chains form an alternating ring which encloses part of the gamma chain. F(1) is attached to F(0) by a central stalk formed by the gamma and epsilon chains, while a peripheral stalk is formed by the delta and b chains.

It localises to the cell inner membrane. Functionally, f(1)F(0) ATP synthase produces ATP from ADP in the presence of a proton or sodium gradient. F-type ATPases consist of two structural domains, F(1) containing the extramembraneous catalytic core and F(0) containing the membrane proton channel, linked together by a central stalk and a peripheral stalk. During catalysis, ATP synthesis in the catalytic domain of F(1) is coupled via a rotary mechanism of the central stalk subunits to proton translocation. Its function is as follows. Component of the F(0) channel, it forms part of the peripheral stalk, linking F(1) to F(0). The chain is ATP synthase subunit b 1 from Bartonella bacilliformis (strain ATCC 35685 / KC583 / Herrer 020/F12,63).